Here is a 132-residue protein sequence, read N- to C-terminus: Fumarate reductase subunit C (132 aa).

A run of 3 helical transmembrane segments spans residues 30-50 (ATSVFAVWFCIVLLYGVLCFA), 70-90 (IVVFLNIITLIATLYHTVTYF), and 110-130 (VVRNALWAVTALVSVIALVLV).

The protein belongs to the FrdC family. Part of an enzyme complex containing four subunits: a flavoprotein (FrdA), an iron-sulfur protein (FrdB), and two hydrophobic anchor proteins (FrdC and FrdD).

It is found in the cell inner membrane. In terms of biological role, anchors the catalytic components of the fumarate reductase complex to the cell membrane, binds quinones. The polypeptide is Fumarate reductase subunit C (Haemophilus influenzae (strain ATCC 51907 / DSM 11121 / KW20 / Rd)).